The chain runs to 460 residues: Bifunctional protein GlmU (460 aa).

The segment at 1–235 is pyrophosphorylase; it reads MTLTAAIVLA…PLSVEGVNDR (235 aa). UDP-N-acetyl-alpha-D-glucosamine contacts are provided by residues 9–12, Lys23, Gln76, and 81–82; these read LAAG and GT. Asp109 provides a ligand contact to Mg(2+). 4 residues coordinate UDP-N-acetyl-alpha-D-glucosamine: Gly146, Glu161, Asn176, and Asn233. Residue Asn233 coordinates Mg(2+). The segment at 236–256 is linker; sequence VQLASLAKAHNLRVCRQWMLD. The interval 257–460 is N-acetyltransferase; that stretch reads GVTIVDPQTT…VDNWKPAWER (204 aa). 2 residues coordinate UDP-N-acetyl-alpha-D-glucosamine: Arg338 and Lys356. Catalysis depends on His368, which acts as the Proton acceptor. Tyr371 and Asn382 together coordinate UDP-N-acetyl-alpha-D-glucosamine. Acetyl-CoA contacts are provided by residues 391–392 and Ala428; that span reads NY.

The protein in the N-terminal section; belongs to the N-acetylglucosamine-1-phosphate uridyltransferase family. In the C-terminal section; belongs to the transferase hexapeptide repeat family. As to quaternary structure, homotrimer. It depends on Mg(2+) as a cofactor.

The protein resides in the cytoplasm. The enzyme catalyses alpha-D-glucosamine 1-phosphate + acetyl-CoA = N-acetyl-alpha-D-glucosamine 1-phosphate + CoA + H(+). It catalyses the reaction N-acetyl-alpha-D-glucosamine 1-phosphate + UTP + H(+) = UDP-N-acetyl-alpha-D-glucosamine + diphosphate. The protein operates within nucleotide-sugar biosynthesis; UDP-N-acetyl-alpha-D-glucosamine biosynthesis; N-acetyl-alpha-D-glucosamine 1-phosphate from alpha-D-glucosamine 6-phosphate (route II): step 2/2. It functions in the pathway nucleotide-sugar biosynthesis; UDP-N-acetyl-alpha-D-glucosamine biosynthesis; UDP-N-acetyl-alpha-D-glucosamine from N-acetyl-alpha-D-glucosamine 1-phosphate: step 1/1. Its pathway is bacterial outer membrane biogenesis; LPS lipid A biosynthesis. Its function is as follows. Catalyzes the last two sequential reactions in the de novo biosynthetic pathway for UDP-N-acetylglucosamine (UDP-GlcNAc). The C-terminal domain catalyzes the transfer of acetyl group from acetyl coenzyme A to glucosamine-1-phosphate (GlcN-1-P) to produce N-acetylglucosamine-1-phosphate (GlcNAc-1-P), which is converted into UDP-GlcNAc by the transfer of uridine 5-monophosphate (from uridine 5-triphosphate), a reaction catalyzed by the N-terminal domain. The polypeptide is Bifunctional protein GlmU (Bifidobacterium animalis subsp. lactis (strain AD011)).